We begin with the raw amino-acid sequence, 29 residues long: Cyclotide mech-3 (29 aa).

The cyclopeptide (Gly-Asn) cross-link spans 1–29 (GLPTCGETCTLGKCNTPKCTCNWPICYKN). Cystine bridges form between cysteine 5-cysteine 19, cysteine 9-cysteine 21, and cysteine 14-cysteine 26.

Post-translationally, this is a cyclic peptide. Contains 3 disulfide bonds.

Its function is as follows. Probably participates in a plant defense mechanism (Potential). Binds to and induces leakage in phospholipd membranes, particularly ones containing 1-palmitoyl-2-oleophosphatidylethanolamine (POPE). In vitro, displays cytotoxicity against cultured cells but no hemolytic activity towards fresh erythrocytes. The polypeptide is Cyclotide mech-3 (Melicytus chathamicus (Chatham Island mahoe)).